A 357-amino-acid polypeptide reads, in one-letter code: Glutamine synthetase (357 aa).

In terms of domain architecture, GS beta-grasp spans 25–104 (VMAEYIWIDA…VLCETWDSDG (80 aa)). Residues 111–357 (YRHDCARLME…IIAETLCGGL (247 aa)) form the GS catalytic domain.

The protein belongs to the glutamine synthetase family. As to quaternary structure, homooctamer.

The protein localises to the cytoplasm. The catalysed reaction is L-glutamate + NH4(+) + ATP = L-glutamine + ADP + phosphate + H(+). This chain is Glutamine synthetase (glnA), found in Emericella nidulans (strain FGSC A4 / ATCC 38163 / CBS 112.46 / NRRL 194 / M139) (Aspergillus nidulans).